Here is a 1359-residue protein sequence, read N- to C-terminus: DNA-directed RNA polymerase subunit beta (1359 aa).

Belongs to the RNA polymerase beta chain family. The RNAP catalytic core consists of 2 alpha, 1 beta, 1 beta' and 1 omega subunit. When a sigma factor is associated with the core the holoenzyme is formed, which can initiate transcription.

It catalyses the reaction RNA(n) + a ribonucleoside 5'-triphosphate = RNA(n+1) + diphosphate. Functionally, DNA-dependent RNA polymerase catalyzes the transcription of DNA into RNA using the four ribonucleoside triphosphates as substrates. The protein is DNA-directed RNA polymerase subunit beta of Nitrosomonas eutropha (strain DSM 101675 / C91 / Nm57).